The following is a 574-amino-acid chain: Putative ABC transporter ATP-binding protein VVA0347 (574 aa).

ABC transporter domains are found at residues 3 to 244 and 299 to 533; these read IEFS…GIRE and LDVR…ANLT. ATP-binding positions include 37 to 44 and 332 to 339; these read GPSGSGKS and GKNGSGKS.

It belongs to the ABC transporter superfamily.

The protein resides in the cell inner membrane. Probably part of an ABC transporter complex. Responsible for energy coupling to the transport system. This chain is Putative ABC transporter ATP-binding protein VVA0347, found in Vibrio vulnificus (strain YJ016).